Here is a 305-residue protein sequence, read N- to C-terminus: Acyl transferase (305 aa).

Residues serine 116, aspartate 213, and histidine 243 each act as charge relay system in the active site.

Belongs to the LuxD family.

Its pathway is lipid metabolism; fatty acid reduction for biolumincescence. In terms of biological role, acyl transferase is part of the fatty acid reductase system required for aldehyde biosynthesis; it produces fatty acids for the luminescent reaction. The chain is Acyl transferase from Photobacterium leiognathi.